Reading from the N-terminus, the 240-residue chain is MIAFIVLPILAAVLHQSSGNVDFDSESPRKPEIQNEIIDLHNSLRRSVNPTASNMLKMEWYPEAAANAERWAYRCIESHSSRDSRVIGGIKCGENIYMSPYPAKWTDIIHAWHGEYKDFKYGVGAVPSNAATGHYTQIVWYKSYRGGCAAAYCPSSKYRYFYVCQYCPAGNMIGKTATPYTSGPPCGDCPSDCDNGLCTNPCTQENTYSNCNSLVQQSSCQDNNMKTKCPASCFCQNKII.

The N-terminal stretch at 1-19 is a signal peptide; that stretch reads MIAFIVLPILAAVLHQSSG. One can recognise an SCP domain in the interval 39–166; sequence DLHNSLRRSV…KYRYFYVCQY (128 aa). Disulfide bonds link cysteine 75-cysteine 153, cysteine 92-cysteine 167, cysteine 148-cysteine 164, cysteine 186-cysteine 193, cysteine 189-cysteine 198, cysteine 202-cysteine 235, cysteine 211-cysteine 229, and cysteine 220-cysteine 233. The 34-residue stretch at 202–235 folds into the ShKT domain; it reads CTQENTYSNCNSLVQQSSCQDNNMKTKCPASCFC.

Belongs to the CRISP family. Expressed by the venom gland.

Its subcellular location is the secreted. In terms of biological role, may block ryanodine receptors (RYR). The polypeptide is Cysteine-rich venom protein (Protobothrops mucrosquamatus (Taiwan habu)).